The sequence spans 433 residues: Tol-Pal system protein TolB (433 aa).

The N-terminal stretch at 1–26 (MSLMTKLGFRALVASCLIAAGGAAHA) is a signal peptide.

The protein belongs to the TolB family. As to quaternary structure, the Tol-Pal system is composed of five core proteins: the inner membrane proteins TolA, TolQ and TolR, the periplasmic protein TolB and the outer membrane protein Pal. They form a network linking the inner and outer membranes and the peptidoglycan layer.

The protein resides in the periplasm. In terms of biological role, part of the Tol-Pal system, which plays a role in outer membrane invagination during cell division and is important for maintaining outer membrane integrity. This chain is Tol-Pal system protein TolB, found in Burkholderia pseudomallei (strain 1710b).